A 559-amino-acid polypeptide reads, in one-letter code: Large neutral amino acids transporter small subunit 3 (559 aa).

The chain crosses the membrane as a helical span at residues 20 to 40 (VLENLFFSAVLLGWGSLLIIL). N57 carries an N-linked (GlcNAc...) asparagine glycan. The next 5 membrane-spanning stretches (helical) occupy residues 78-98 (LGFTIGSFVLSATTLPLGILM), 105-124 (PVRLVGSACFTASCTLMALA), 131-151 (LSPLIFLALSLNGFGGICLTF), 168-188 (MALMIGSYASSAITFPGIKLI), and 191-211 (AGVAFVVIMFTWSGLACLIFL). N-linked (GlcNAc...) asparagine glycans are attached at residues N212 and N229. Residues S237, S262, and S267 each carry the phosphoserine modification. 6 consecutive transmembrane segments (helical) span residues 304–324 (FLWSLLTMGMTQLRIIFYMAA), 357–377 (SVFGAMQLLCLLTCPLIGYIM), 419–439 (AISAFTLTNLLLVGFGITCLI), 446–466 (FVTFVLHTIVRGFFHSACGSL), 485–505 (LISAVFALLQQPLFMAMVGPL), and 510–530 (FWVNLGLLLFSLLGFLLPSYL).

Belongs to the SLC43A transporter (TC 2.A.1.44) family. As to expression, ubiquitously expressed in fetus and adult. Highest expression in adult pancreas, liver, skeletal muscle. In fetus, highest expression in liver and lower levels in kidney, and lung. Exclusively expressed in the glomeruli along the glomerular capillary walls.

The protein resides in the cell membrane. It localises to the apical cell membrane. It is found in the endoplasmic reticulum membrane. It carries out the reaction D-leucine(in) = D-leucine(out). It catalyses the reaction L-leucine(in) = L-leucine(out). The catalysed reaction is L-isoleucine(in) = L-isoleucine(out). The enzyme catalyses L-methionine(in) = L-methionine(out). It carries out the reaction L-phenylalanine(in) = L-phenylalanine(out). It catalyses the reaction L-valine(in) = L-valine(out). Functionally, uniport that mediates the transport of neutral amino acids such as L-leucine, L-isoleucine, L-valine, and L-phenylalanine. The transport activity is sodium ions-independent, electroneutral and mediated by a facilitated diffusion. The protein is Large neutral amino acids transporter small subunit 3 of Homo sapiens (Human).